We begin with the raw amino-acid sequence, 302 residues long: Sulfate adenylyltransferase subunit 2 (302 aa).

Belongs to the PAPS reductase family. CysD subfamily. As to quaternary structure, heterodimer composed of CysD, the smaller subunit, and CysN.

The enzyme catalyses sulfate + ATP + H(+) = adenosine 5'-phosphosulfate + diphosphate. It participates in sulfur metabolism; hydrogen sulfide biosynthesis; sulfite from sulfate: step 1/3. Functionally, with CysN forms the ATP sulfurylase (ATPS) that catalyzes the adenylation of sulfate producing adenosine 5'-phosphosulfate (APS) and diphosphate, the first enzymatic step in sulfur assimilation pathway. APS synthesis involves the formation of a high-energy phosphoric-sulfuric acid anhydride bond driven by GTP hydrolysis by CysN coupled to ATP hydrolysis by CysD. In Xanthomonas oryzae pv. oryzae (strain MAFF 311018), this protein is Sulfate adenylyltransferase subunit 2.